Reading from the N-terminus, the 119-residue chain is Large ribosomal subunit protein uL22 (119 aa).

It belongs to the universal ribosomal protein uL22 family. Part of the 50S ribosomal subunit.

In terms of biological role, this protein binds specifically to 23S rRNA; its binding is stimulated by other ribosomal proteins, e.g. L4, L17, and L20. It is important during the early stages of 50S assembly. It makes multiple contacts with different domains of the 23S rRNA in the assembled 50S subunit and ribosome. Its function is as follows. The globular domain of the protein is located near the polypeptide exit tunnel on the outside of the subunit, while an extended beta-hairpin is found that lines the wall of the exit tunnel in the center of the 70S ribosome. This chain is Large ribosomal subunit protein uL22, found in Chlorobium phaeovibrioides (strain DSM 265 / 1930) (Prosthecochloris vibrioformis (strain DSM 265)).